A 195-amino-acid chain; its full sequence is CDP-diacylglycerol--glycerol-3-phosphate 3-phosphatidyltransferase (195 aa).

A run of 4 helical transmembrane segments spans residues 7–24, 60–81, 134–150, and 157–173; these read ITVLRVLLIPIFILLFYL, FGAFLDPVADKLMVAVALVLLV, MLALVILLANPPAFTFW, and FLLIAGGLTLWSMLQYL.

Belongs to the CDP-alcohol phosphatidyltransferase class-I family.

Its subcellular location is the cell membrane. The enzyme catalyses a CDP-1,2-diacyl-sn-glycerol + sn-glycerol 3-phosphate = a 1,2-diacyl-sn-glycero-3-phospho-(1'-sn-glycero-3'-phosphate) + CMP + H(+). Its pathway is phospholipid metabolism; phosphatidylglycerol biosynthesis; phosphatidylglycerol from CDP-diacylglycerol: step 1/2. This protein catalyzes the committed step to the synthesis of the acidic phospholipids. The polypeptide is CDP-diacylglycerol--glycerol-3-phosphate 3-phosphatidyltransferase (pgsA) (Pseudomonas fluorescens).